Consider the following 65-residue polypeptide: DNA-directed RNA polymerase subunit omega (65 aa).

The protein belongs to the RNA polymerase subunit omega family. In terms of assembly, the RNAP catalytic core consists of 2 alpha, 1 beta, 1 beta' and 1 omega subunit. When a sigma factor is associated with the core the holoenzyme is formed, which can initiate transcription.

It carries out the reaction RNA(n) + a ribonucleoside 5'-triphosphate = RNA(n+1) + diphosphate. Functionally, promotes RNA polymerase assembly. Latches the N- and C-terminal regions of the beta' subunit thereby facilitating its interaction with the beta and alpha subunits. In Finegoldia magna (strain ATCC 29328 / DSM 20472 / WAL 2508) (Peptostreptococcus magnus), this protein is DNA-directed RNA polymerase subunit omega.